The following is a 71-amino-acid chain: MSALKFVLICGLVLLLIETIPGVSLNLMRATNRHQCDTNDDCEEDECCVLVGGNVNNPGVQTRICLACSRK.

A signal peptide spans 1-20 (MSALKFVLICGLVLLLIETI). Residues 21-29 (PGVSLNLMR) constitute a propeptide that is removed on maturation. 3 disulfides stabilise this stretch: Cys36–Cys48, Cys42–Cys65, and Cys47–Cys68.

In terms of tissue distribution, expressed by the venom duct.

It is found in the secreted. Functionally, elicits an uncoordinated twisting syndrome when injected into C.elegans, but has no effect on mice. This chain is Augerpeptide-s7a, found in Terebra subulata (Chocolate spotted auger).